The sequence spans 360 residues: Ribosomal RNA large subunit methyltransferase M (360 aa).

Residues serine 187, cysteine 220–glycine 223, aspartate 239, aspartate 259, and aspartate 276 each bind S-adenosyl-L-methionine. The active-site Proton acceptor is the lysine 305.

The protein belongs to the class I-like SAM-binding methyltransferase superfamily. RNA methyltransferase RlmE family. RlmM subfamily. In terms of assembly, monomer.

It localises to the cytoplasm. It carries out the reaction cytidine(2498) in 23S rRNA + S-adenosyl-L-methionine = 2'-O-methylcytidine(2498) in 23S rRNA + S-adenosyl-L-homocysteine + H(+). In terms of biological role, catalyzes the 2'-O-methylation at nucleotide C2498 in 23S rRNA. The sequence is that of Ribosomal RNA large subunit methyltransferase M from Shewanella halifaxensis (strain HAW-EB4).